A 215-amino-acid chain; its full sequence is Protein FAM167A (215 aa).

2 disordered regions span residues 1–26 (MSVP…PPDD) and 63–109 (RPAA…LTTG). Residues 124-157 (LRKELAEMRLQDQQLARQLMRLRGDINKLKIEQT) adopt a coiled-coil conformation.

The protein belongs to the FAM167 (SEC) family.

This is Protein FAM167A (Fam167a) from Mus musculus (Mouse).